The chain runs to 239 residues: Uracil-DNA glycosylase (239 aa).

D65 (proton acceptor) is an active-site residue.

This sequence belongs to the uracil-DNA glycosylase (UDG) superfamily. UNG family.

Its subcellular location is the cytoplasm. The catalysed reaction is Hydrolyzes single-stranded DNA or mismatched double-stranded DNA and polynucleotides, releasing free uracil.. In terms of biological role, excises uracil residues from the DNA which can arise as a result of misincorporation of dUMP residues by DNA polymerase or due to deamination of cytosine. The polypeptide is Uracil-DNA glycosylase (Levilactobacillus brevis (strain ATCC 367 / BCRC 12310 / CIP 105137 / JCM 1170 / LMG 11437 / NCIMB 947 / NCTC 947) (Lactobacillus brevis)).